A 332-amino-acid polypeptide reads, in one-letter code: Tetraacyldisaccharide 4'-kinase (332 aa).

ATP is bound at residue 55 to 62 (GVGGSGKT).

Belongs to the LpxK family.

The enzyme catalyses a lipid A disaccharide + ATP = a lipid IVA + ADP + H(+). Its pathway is glycolipid biosynthesis; lipid IV(A) biosynthesis; lipid IV(A) from (3R)-3-hydroxytetradecanoyl-[acyl-carrier-protein] and UDP-N-acetyl-alpha-D-glucosamine: step 6/6. Its function is as follows. Transfers the gamma-phosphate of ATP to the 4'-position of a tetraacyldisaccharide 1-phosphate intermediate (termed DS-1-P) to form tetraacyldisaccharide 1,4'-bis-phosphate (lipid IVA). This chain is Tetraacyldisaccharide 4'-kinase, found in Acidithiobacillus ferrooxidans (strain ATCC 53993 / BNL-5-31) (Leptospirillum ferrooxidans (ATCC 53993)).